We begin with the raw amino-acid sequence, 126 residues long: C-type natriuretic peptide (126 aa).

The N-terminal stretch at Met1 to Ala23 is a signal peptide. Positions Arg19–Leu71 are disordered. Residues Lys24–Arg73 constitute a propeptide that is removed on maturation. The span at Gly26–Pro35 shows a compositional bias: pro residues. A disulfide bridge connects residues Cys110 and Cys126.

The protein belongs to the natriuretic peptide family. Degraded by IDE (in vitro). As to expression, expressed exclusively in brain.

The protein resides in the secreted. Functionally, hormone which plays a role in endochondral ossification through regulation of cartilaginous growth plate chondrocytes proliferation and differentiation. May also be vasoactive and natriuretic. Acts by specifically binding and stimulating NPR2 to produce cGMP. Binds the clearance receptor NPR3. The chain is C-type natriuretic peptide (Nppc) from Rattus norvegicus (Rat).